A 680-amino-acid polypeptide reads, in one-letter code: DNA ligase (680 aa).

NAD(+) contacts are provided by residues 32–36 (DAVYD), 81–82 (SL), and E115. Catalysis depends on K117, which acts as the N6-AMP-lysine intermediate. R138, E175, K291, and K315 together coordinate NAD(+). Zn(2+) contacts are provided by C409, C412, C427, and C432. One can recognise a BRCT domain in the interval 600–680 (ASEQHLKGLT…RLQAMLKDSP (81 aa)).

This sequence belongs to the NAD-dependent DNA ligase family. LigA subfamily. Requires Mg(2+) as cofactor. It depends on Mn(2+) as a cofactor.

The enzyme catalyses NAD(+) + (deoxyribonucleotide)n-3'-hydroxyl + 5'-phospho-(deoxyribonucleotide)m = (deoxyribonucleotide)n+m + AMP + beta-nicotinamide D-nucleotide.. Its function is as follows. DNA ligase that catalyzes the formation of phosphodiester linkages between 5'-phosphoryl and 3'-hydroxyl groups in double-stranded DNA using NAD as a coenzyme and as the energy source for the reaction. It is essential for DNA replication and repair of damaged DNA. This chain is DNA ligase, found in Synechococcus sp. (strain CC9902).